The chain runs to 263 residues: MSDHGRMHSTGSEVAAPVAPDPDTEGVHPHFNRRVTSFRARRSTISDGQQATWDRLWPQLGRQARDGDEPPGPLDTDAWFGRHAPVVLEIGCGTGTSTLAMAQAEPGIDVVAVEVYRRGLAQLLSAIDRTAATEHPVSNIRLIRGDGVDVLTHMFGSASLTGVRVFFPDPWPKARHHKRRLLQPDTMALIADRLRPGGVLHAATDHQGYAAHIAEVGDAEPRLRRVAMDSADLPMSVTRPVTKYERKALAGPVVTELLWERTP.

The segment at 1–33 (MSDHGRMHSTGSEVAAPVAPDPDTEGVHPHFNR) is disordered. S-adenosyl-L-methionine contacts are provided by E89, E114, D146, and D169. D169 is an active-site residue. Substrate is bound by residues K173, D205, and 242 to 245 (TKYE).

The protein belongs to the class I-like SAM-binding methyltransferase superfamily. TrmB family.

It catalyses the reaction guanosine(46) in tRNA + S-adenosyl-L-methionine = N(7)-methylguanosine(46) in tRNA + S-adenosyl-L-homocysteine. The protein operates within tRNA modification; N(7)-methylguanine-tRNA biosynthesis. In terms of biological role, catalyzes the formation of N(7)-methylguanine at position 46 (m7G46) in tRNA. The chain is tRNA (guanine-N(7)-)-methyltransferase from Mycolicibacterium gilvum (strain PYR-GCK) (Mycobacterium gilvum (strain PYR-GCK)).